Consider the following 476-residue polypeptide: Nodulation protein NoeA (476 aa).

Functionally, not known; does not seem to participate in nod factor synthesis but required for nodulation on some specific Medicago species such as M.littoralis. The chain is Nodulation protein NoeA (noeA) from Rhizobium meliloti (strain 1021) (Ensifer meliloti).